Consider the following 273-residue polypeptide: Probable ribosomal RNA small subunit methyltransferase A (273 aa).

S-adenosyl-L-methionine-binding residues include Asn23, Leu25, Gly50, Glu71, Asp95, and Asn110.

Belongs to the class I-like SAM-binding methyltransferase superfamily. rRNA adenine N(6)-methyltransferase family. RsmA subfamily.

The protein resides in the cytoplasm. Specifically dimethylates two adjacent adenosines in the loop of a conserved hairpin near the 3'-end of 16S rRNA in the 30S particle. May play a critical role in biogenesis of 30S subunits. The polypeptide is Probable ribosomal RNA small subunit methyltransferase A (Thermococcus sibiricus (strain DSM 12597 / MM 739)).